A 1293-amino-acid polypeptide reads, in one-letter code: Enterobactin synthase component F (1293 aa).

The interval 1–301 is elongation/condensation; that stretch reads MSQHLPLVAA…NVLPLGIHIA (301 aa). Residues 482-887 are adenylatione; it reads SYREMREQVV…ALPDVEQAVT (406 aa). The region spanning 971 to 1046 is the Carrier domain; it reads APKAGSETII…KLATIIDAEE (76 aa). Ser-1006 bears the O-(pantetheine 4'-phosphoryl)serine mark. Positions 1066–1293 are thioesterase; the sequence is PTLFCFHPAS…GPIIRATLNR (228 aa). The Proton acceptor; for thioesterase activity role is filled by His-1271.

It belongs to the ATP-dependent AMP-binding enzyme family. EntF subfamily. As to quaternary structure, proteins EntB, EntD, EntE and EntF are the component of the enterobactin synthase. Components probably do not form a stable complex. EntF acts as a catalytic monomer. Interacts with the MbtH-like protein YbdZ. YbdZ binds to the adenylation domain, but does not alter the structure of the domain. Requires pantetheine 4'-phosphate as cofactor. Post-translationally, 4'-phosphopantetheine is transferred from CoA to a specific serine of apo-EntF by EntD. Holo-EntF so formed is then acylated with seryl-AMP.

It localises to the cytoplasm. The catalysed reaction is 3 2,3-dihydroxybenzoate + 3 L-serine + 6 ATP = enterobactin + 6 AMP + 6 diphosphate + 4 H(+). It carries out the reaction holo-[peptidyl-carrier protein] + L-serine + ATP = L-seryl-[peptidyl-carrier protein] + AMP + diphosphate. It functions in the pathway siderophore biosynthesis; enterobactin biosynthesis. Adenylation activity is increased in the presence of the MbtH-like protein YbdZ. Functionally, involved in the biosynthesis of the siderophore enterobactin (enterochelin), which is a macrocyclic trimeric lactone of N-(2,3-dihydroxybenzoyl)-serine. EntF catalyzes the activation of L-serine via ATP-dependent PPi exchange reaction to form seryladenylate. Activated L-serine is loaded onto the peptidyl carrier domain via a thioester linkage to the phosphopanthetheine moiety, forming seryl-S-Ppant-EntF. EntF acts then as the sole catalyst for the formation of the three amide and three ester linkages found in enterobactin, using seryladenylate and 2,3-dihydroxybenzoate-S-Ppant-EntB (DHB-S-Ppant-EntB) as substrates, via the formation of a DHB-Ser-S-Ppant-EntF intermediate. This chain is Enterobactin synthase component F, found in Escherichia coli (strain K12).